The following is a 467-amino-acid chain: 3-isopropylmalate dehydratase large subunit (467 aa).

[4Fe-4S] cluster is bound by residues C347, C407, and C410.

Belongs to the aconitase/IPM isomerase family. LeuC type 1 subfamily. Heterodimer of LeuC and LeuD. Requires [4Fe-4S] cluster as cofactor.

The catalysed reaction is (2R,3S)-3-isopropylmalate = (2S)-2-isopropylmalate. It functions in the pathway amino-acid biosynthesis; L-leucine biosynthesis; L-leucine from 3-methyl-2-oxobutanoate: step 2/4. Functionally, catalyzes the isomerization between 2-isopropylmalate and 3-isopropylmalate, via the formation of 2-isopropylmaleate. The chain is 3-isopropylmalate dehydratase large subunit from Crocosphaera subtropica (strain ATCC 51142 / BH68) (Cyanothece sp. (strain ATCC 51142)).